The chain runs to 205 residues: Thymidine kinase (205 aa).

ATP is bound by residues 9–16 (SAMNAGKT) and 88–91 (DECH). The active-site Proton acceptor is the Glu89. The Zn(2+) site is built by Cys146, Cys148, Cys183, and His186.

Belongs to the thymidine kinase family. Homotetramer.

It localises to the cytoplasm. The enzyme catalyses thymidine + ATP = dTMP + ADP + H(+). The polypeptide is Thymidine kinase (Blochmanniella pennsylvanica (strain BPEN)).